The following is a 511-amino-acid chain: MNSSGVEQGVVIAESEPPRGNRSRYAFACAILASMTSIILGYDIGVMSGASIFIKDDLKLSDVQLEILMGILNIYSLVGSGAAGRTSDWLGRRYTIVLAGAFFFCGALLMGFATNYPFIMVGRFVAGIGVGYAMMIAPVYTAEVAPASSRGFLTSFPEIFINIGILLGYVSNYFFSKLPEHLGWRFMLGVGAVPSVFLAIGVLAMPESPRWLVLQGRLGDAFKVLDKTSNTKEEAISRLDDIKRAVGIPDDMTDDVIVVPNKKSAGKGVWKDLLVRPTPSVRHILIACLGIHFAQQASGIDAVVLYSPTIFSKAGLKSKNDQLLATVAVGVVKTLFIVVGTCVVDRFGRRALLLTSMGGMFLSLTALGTSLTVINRNPGQTLKWAIGLAVTTVMTFVATFSIGAGPVTWVYCSEIFPVRLRAQGASLGVMLNRLMSGIIGMTFLSLSKGLTIGGAFLLFAGVAAAAWVFFFTFLPETRGIPLEEMETLFGSYTANKKNNSMSKDNEVVDGQ.

A run of 12 helical transmembrane segments spans residues 27 to 47 (FACA…IGVM), 63 to 83 (VQLE…SGAA), 94 to 114 (YTIV…GFAT), 124 to 144 (FVAG…TAEV), 151 to 171 (GFLT…GYVS), 186 to 206 (FMLG…LAMP), 284 to 304 (ILIA…DAVV), 324 to 344 (LATV…TCVV), 351 to 371 (ALLL…GTSL), 384 to 404 (WAIG…SIGA), 424 to 444 (GASL…MTFL), and 454 to 474 (GAFL…FTFL).

This sequence belongs to the major facilitator superfamily. Sugar transporter (TC 2.A.1.1) family.

Its subcellular location is the membrane. Plasma membrane sugar-proton symporter. This chain is Putative polyol transporter 1 (PLT1), found in Arabidopsis thaliana (Mouse-ear cress).